A 285-amino-acid chain; its full sequence is Probable endonuclease 4 (285 aa).

Residues H69, H109, E145, D179, H182, H216, D229, H231, and E261 each coordinate Zn(2+).

This sequence belongs to the AP endonuclease 2 family. The cofactor is Zn(2+).

It carries out the reaction Endonucleolytic cleavage to 5'-phosphooligonucleotide end-products.. Its function is as follows. Endonuclease IV plays a role in DNA repair. It cleaves phosphodiester bonds at apurinic or apyrimidinic (AP) sites, generating a 3'-hydroxyl group and a 5'-terminal sugar phosphate. The protein is Probable endonuclease 4 of Salmonella paratyphi A (strain AKU_12601).